We begin with the raw amino-acid sequence, 297 residues long: uncharacterized protein (297 aa).

The disordered stretch occupies residues phenylalanine 136–lysine 174. Acidic residues predominate over residues threonine 139 to asparagine 170.

To S.pombe SpBC725.03.

This is an uncharacterized protein from Saccharomyces cerevisiae (strain ATCC 204508 / S288c) (Baker's yeast).